We begin with the raw amino-acid sequence, 78 residues long: NAD(P)H-quinone oxidoreductase subunit O (78 aa).

Belongs to the complex I NdhO subunit family. As to quaternary structure, NDH-1 can be composed of about 15 different subunits; different subcomplexes with different compositions have been identified which probably have different functions.

It localises to the cellular thylakoid membrane. The enzyme catalyses a plastoquinone + NADH + (n+1) H(+)(in) = a plastoquinol + NAD(+) + n H(+)(out). The catalysed reaction is a plastoquinone + NADPH + (n+1) H(+)(in) = a plastoquinol + NADP(+) + n H(+)(out). In terms of biological role, NDH-1 shuttles electrons from an unknown electron donor, via FMN and iron-sulfur (Fe-S) centers, to quinones in the respiratory and/or the photosynthetic chain. The immediate electron acceptor for the enzyme in this species is believed to be plastoquinone. Couples the redox reaction to proton translocation, and thus conserves the redox energy in a proton gradient. Cyanobacterial NDH-1 also plays a role in inorganic carbon-concentration. This is NAD(P)H-quinone oxidoreductase subunit O from Prochlorococcus marinus (strain MIT 9312).